The chain runs to 1452 residues: Receptor-type tyrosine-protein phosphatase mu (1452 aa).

Residues 1–20 form the signal peptide; sequence MRGLGTCLATLAGLLLTAAG. Over 21 to 742 the chain is Extracellular; the sequence is ETFSGGCLFD…PEKQTDHTVK (722 aa). One can recognise an MAM domain in the interval 22–184; it reads TFSGGCLFDE…VKVLGHPCTR (163 aa). The cysteines at positions 27 and 36 are disulfide-linked. N-linked (GlcNAc...) asparagine glycosylation is found at N72, N92, N131, and N249. Disulfide bonds link C96-C182 and C206-C260. One can recognise an Ig-like C2-type domain in the interval 186-277; the sequence is PHFLRIQNVE…VGISNYAELV (92 aa). 4 consecutive Fibronectin type-III domains span residues 284-379, 382-480, 482-587, and 589-671; these read PIAP…CADP, GPRK…TDED, PGAV…SAPS, and PAYE…DSLQ. N406, N414, N454, N534, N544, N598, N651, and N681 each carry an N-linked (GlcNAc...) asparagine glycan. A helical transmembrane segment spans residues 743–764; it reads IAGVIAGILLFVIIFLGVVLVM. At 765–1452 the chain is on the cytoplasmic side; the sequence is KKRKLAKKRK…EVALEYLNSG (688 aa). Position 821 is a phosphoserine (S821). Tyrosine-protein phosphatase domains are found at residues 900–1154 and 1186–1448; these read FKEE…ILEA and IKEE…ALEY. Substrate is bound by residues D1063, 1095–1101, and Q1139; that span reads CSAGAGR. C1095 serves as the catalytic Phosphocysteine intermediate. C1389 serves as the catalytic Phosphocysteine intermediate.

It belongs to the protein-tyrosine phosphatase family. Receptor class 2B subfamily. Homodimer.

It localises to the cell membrane. The catalysed reaction is O-phospho-L-tyrosyl-[protein] + H2O = L-tyrosyl-[protein] + phosphate. Its function is as follows. Receptor protein-tyrosine phosphatase that mediates homotypic cell-cell interactions and plays a role in adipogenic differentiation via modulation of p120 catenin/CTNND1 phosphorylation. Promotes CTNND1 dephosphorylation and prevents its cytoplasmic localization where it inhibits SLC2A4 membrane trafficking. In turn, SLC2A4 is directed to the plasma membrane and performs its glucose transporter function. In Homo sapiens (Human), this protein is Receptor-type tyrosine-protein phosphatase mu (PTPRM).